The chain runs to 445 residues: Enolase (445 aa).

His165 and Glu174 together coordinate substrate. Glu217 (proton donor) is an active-site residue. Positions 252, 303, and 330 each coordinate Mg(2+). Substrate is bound by residues Glu303 and Asp330. Lys355 acts as the Proton acceptor in catalysis. Substrate is bound by residues 382–385 and Lys406; that span reads SHRS.

The protein belongs to the enolase family. In terms of assembly, homodimer. Requires Mg(2+) as cofactor.

Its subcellular location is the cytoplasm. The catalysed reaction is (2R)-2-phosphoglycerate = phosphoenolpyruvate + H2O. The protein operates within carbohydrate degradation; glycolysis; pyruvate from D-glyceraldehyde 3-phosphate: step 4/5. The sequence is that of Enolase (ENO) from Eimeria tenella (Coccidian parasite).